The following is a 683-amino-acid chain: Methionine--tRNA ligase (683 aa).

The short motif at 15–25 (PYANGSIHLGH) is the 'HIGH' region element. Positions 146, 149, 159, and 162 each coordinate Zn(2+). The short motif at 332-336 (KMSKS) is the 'KMSKS' region element. An ATP-binding site is contributed by Lys335. The tRNA-binding domain occupies 582 to 683 (DFAKVDLRIA…QGAQAGMRVM (102 aa)).

Belongs to the class-I aminoacyl-tRNA synthetase family. MetG type 1 subfamily. As to quaternary structure, homodimer. It depends on Zn(2+) as a cofactor.

It is found in the cytoplasm. It carries out the reaction tRNA(Met) + L-methionine + ATP = L-methionyl-tRNA(Met) + AMP + diphosphate. Functionally, is required not only for elongation of protein synthesis but also for the initiation of all mRNA translation through initiator tRNA(fMet) aminoacylation. In Vibrio cholerae serotype O1 (strain ATCC 39315 / El Tor Inaba N16961), this protein is Methionine--tRNA ligase.